The following is a 188-amino-acid chain: uncharacterized protein (188 aa).

Residues 121–142 form a disordered region; it reads ADTLSRKNKRSSDQKRNGQHFE. The span at 130 to 142 shows a compositional bias: basic and acidic residues; the sequence is RSSDQKRNGQHFE.

The protein belongs to the chlamydial CPn_0422/CT_273/TC_0545 family.

This is an uncharacterized protein from Chlamydia trachomatis serovar D (strain ATCC VR-885 / DSM 19411 / UW-3/Cx).